The following is a 124-amino-acid chain: Small ribosomal subunit protein uS13 (124 aa).

The interval Gly94–Lys124 is disordered. Residues Gln100–Lys124 show a composition bias toward basic residues.

It belongs to the universal ribosomal protein uS13 family. In terms of assembly, part of the 30S ribosomal subunit. Forms a loose heterodimer with protein S19. Forms two bridges to the 50S subunit in the 70S ribosome.

In terms of biological role, located at the top of the head of the 30S subunit, it contacts several helices of the 16S rRNA. In the 70S ribosome it contacts the 23S rRNA (bridge B1a) and protein L5 of the 50S subunit (bridge B1b), connecting the 2 subunits; these bridges are implicated in subunit movement. Contacts the tRNAs in the A and P-sites. In Flavobacterium johnsoniae (strain ATCC 17061 / DSM 2064 / JCM 8514 / BCRC 14874 / CCUG 350202 / NBRC 14942 / NCIMB 11054 / UW101) (Cytophaga johnsonae), this protein is Small ribosomal subunit protein uS13.